The following is a 369-amino-acid chain: GTPase Obg (369 aa).

In terms of domain architecture, Obg spans Met1–Leu159. The disordered stretch occupies residues Ile128–Glu148. The region spanning Ala160 to Ala333 is the OBG-type G domain. GTP is bound by residues Gly166–Ser173, Phe191–His195, Asp213–Gly216, Asn283–Asp286, and Ser314–Leu316. The Mg(2+) site is built by Ser173 and Thr193.

The protein belongs to the TRAFAC class OBG-HflX-like GTPase superfamily. OBG GTPase family. Monomer. Mg(2+) serves as cofactor.

The protein localises to the cytoplasm. In terms of biological role, an essential GTPase which binds GTP, GDP and possibly (p)ppGpp with moderate affinity, with high nucleotide exchange rates and a fairly low GTP hydrolysis rate. Plays a role in control of the cell cycle, stress response, ribosome biogenesis and in those bacteria that undergo differentiation, in morphogenesis control. This chain is GTPase Obg, found in Janthinobacterium sp. (strain Marseille) (Minibacterium massiliensis).